Reading from the N-terminus, the 207-residue chain is MNITINPMESLVSKPNTSNSIILTNLNDFSNWARLSSLWPLLYGTSCCFIEFASLIGSRFDFDRYGLVPRSSPRQADLIITAGTVTMKMAPSLIRLYEQMPEPKYVIAMGACTITGGMFSTDSYSTVRGVDKLIPVDIYLPGCPPKPEAIIDAVIKLRKKVAQETYKDQKRSIRGNRFFTLKHQFDFVPSIHTGQYTQQLHDKSLSK.

[4Fe-4S] cluster-binding residues include cysteine 47, cysteine 48, cysteine 112, and cysteine 143.

The protein belongs to the complex I 20 kDa subunit family. In terms of assembly, NDH is composed of at least 16 different subunits, 5 of which are encoded in the nucleus. The cofactor is [4Fe-4S] cluster.

It is found in the plastid. The protein localises to the chloroplast thylakoid membrane. It catalyses the reaction a plastoquinone + NADH + (n+1) H(+)(in) = a plastoquinol + NAD(+) + n H(+)(out). The enzyme catalyses a plastoquinone + NADPH + (n+1) H(+)(in) = a plastoquinol + NADP(+) + n H(+)(out). In terms of biological role, NDH shuttles electrons from NAD(P)H:plastoquinone, via FMN and iron-sulfur (Fe-S) centers, to quinones in the photosynthetic chain and possibly in a chloroplast respiratory chain. The immediate electron acceptor for the enzyme in this species is believed to be plastoquinone. Couples the redox reaction to proton translocation, and thus conserves the redox energy in a proton gradient. The sequence is that of NAD(P)H-quinone oxidoreductase subunit K, chloroplastic from Psilotum nudum (Whisk fern).